A 125-amino-acid chain; its full sequence is Translation initiation factor 5A (125 aa).

Lys35 bears the Hypusine mark.

It belongs to the eIF-5A family.

It is found in the cytoplasm. Functionally, functions by promoting the formation of the first peptide bond. This chain is Translation initiation factor 5A (eIF5A), found in Methanoregula boonei (strain DSM 21154 / JCM 14090 / 6A8).